Here is a 621-residue protein sequence, read N- to C-terminus: Lethal(3)malignant brain tumor-like protein 4 (621 aa).

Positions 1 to 48 are disordered; that stretch reads MRQPNRKRKLSLESTERMNQDRCTGQTEEEKKPGEVTTPSKRESSVTT. Basic and acidic residues-rich tracts occupy residues 10-20 and 28-44; these read LSLESTERMNQ and EEEKKPGEVTTPSKRES. MBT repeat units lie at residues 52–152, 160–260, and 269–364; these read WSWE…LHIP, FVWM…LVAP, and FSWT…LEVP. The CCHHC-type zinc-finger motif lies at 370 to 414; the sequence is VKILPGQPACPTPGCRGIGHIRGPRYAGHHSAFGCPYSDVNLKRE. Zn(2+) contacts are provided by C379, C384, H398, and C404. An SAM domain is found at 543 to 607; it reads WTVDEVAEFV…YNSILMFRNS (65 aa).

The protein localises to the nucleus. In terms of biological role, putative Polycomb group (PcG) protein. PcG proteins maintain the transcriptionally repressive state of genes, probably via a modification of chromatin, rendering it heritably changed in its expressibility. This chain is Lethal(3)malignant brain tumor-like protein 4 (L3mbtl4), found in Mus musculus (Mouse).